The following is a 225-amino-acid chain: 7-cyano-7-deazaguanine synthase (225 aa).

Position 10–20 (10–20 (VSGGLDSTTAL)) interacts with ATP. Zn(2+) is bound by residues Cys-189, Cys-199, Cys-202, and Cys-205.

It belongs to the QueC family. Zn(2+) is required as a cofactor.

It catalyses the reaction 7-carboxy-7-deazaguanine + NH4(+) + ATP = 7-cyano-7-deazaguanine + ADP + phosphate + H2O + H(+). The protein operates within purine metabolism; 7-cyano-7-deazaguanine biosynthesis. Functionally, catalyzes the ATP-dependent conversion of 7-carboxy-7-deazaguanine (CDG) to 7-cyano-7-deazaguanine (preQ(0)). This Saccharophagus degradans (strain 2-40 / ATCC 43961 / DSM 17024) protein is 7-cyano-7-deazaguanine synthase.